We begin with the raw amino-acid sequence, 209 residues long: Nucleoside triphosphate pyrophosphatase (209 aa).

Asp79 acts as the Proton acceptor in catalysis.

The protein belongs to the Maf family. It depends on a divalent metal cation as a cofactor.

It is found in the cytoplasm. It catalyses the reaction a ribonucleoside 5'-triphosphate + H2O = a ribonucleoside 5'-phosphate + diphosphate + H(+). The catalysed reaction is a 2'-deoxyribonucleoside 5'-triphosphate + H2O = a 2'-deoxyribonucleoside 5'-phosphate + diphosphate + H(+). Nucleoside triphosphate pyrophosphatase. May have a dual role in cell division arrest and in preventing the incorporation of modified nucleotides into cellular nucleic acids. The chain is Nucleoside triphosphate pyrophosphatase from Mycolicibacterium gilvum (strain PYR-GCK) (Mycobacterium gilvum (strain PYR-GCK)).